Here is a 314-residue protein sequence, read N- to C-terminus: Homoserine O-acetyltransferase (314 aa).

C142 serves as the catalytic Acyl-thioester intermediate. Positions 163 and 192 each coordinate substrate. The Proton acceptor role is filled by H235. E237 is an active-site residue. Residue R249 coordinates substrate.

Belongs to the MetA family.

The protein localises to the cytoplasm. The enzyme catalyses L-homoserine + acetyl-CoA = O-acetyl-L-homoserine + CoA. It participates in amino-acid biosynthesis; L-methionine biosynthesis via de novo pathway; O-acetyl-L-homoserine from L-homoserine: step 1/1. Functionally, transfers an acetyl group from acetyl-CoA to L-homoserine, forming acetyl-L-homoserine. This is Homoserine O-acetyltransferase from Streptococcus pneumoniae serotype 4 (strain ATCC BAA-334 / TIGR4).